The following is a 459-amino-acid chain: Zinc finger protein ZPR1 (459 aa).

A compositionally biased stretch (low complexity) spans 1-29 (MSAGGAVEPGLPAAAAAPSAAPARDPGPG). The segment at 1-43 (MSAGGAVEPGLPAAAAAPSAAPARDPGPGHLFRPISAEDEEQQ) is disordered. C4-type zinc fingers lie at residues 51-83 (CMNCYRNGMTRLLLTKIPFFREIIVSSFSCEHC) and 259-291 (CPECNAPAQTNMKLVQIPHFKEVIIMATNCENC). The tract at residues 438–459 (NEELGLNDMKTEGYETGLPAQR) is disordered.

This sequence belongs to the ZPR1 family. In terms of assembly, component of an import snRNP complex composed of KPNB1, SNUPN, SMN1 and ZNF259. Interacts (via C-terminal region) with SMN1 (via C-terminal region); the interaction occurs after treatment with serum. Interacts with elongation factor 1-alpha EEF1A1; the interaction occurs in a epidermal growth factor (EGF)-dependent manner. Interacts (via zinc fingers) with EGFR (via C-terminal cytoplasmic kinase domain); the interaction is negatively regulated in response to epidermal growth factor (EGF) stimulation and EGFR kinase activity. May also bind to the PDGFR receptor.

It is found in the nucleus. It localises to the cytoplasm. The protein localises to the nucleolus. The protein resides in the perinuclear region. Its subcellular location is the gem. It is found in the cajal body. It localises to the cell projection. The protein localises to the axon. The protein resides in the growth cone. Acts as a signaling molecule that communicates proliferative growth signals from the cytoplasm to the nucleus. Plays a role for the localization and accumulation of the survival motor neuron protein SMN1 in sub-nuclear bodies, including gems and Cajal bodies. Induces neuron differentiation and stimulates axonal growth and formation of growth cone in spinal cord motor neurons. Plays a role in the splicing of cellular pre-mRNAs. May be involved in H(2)O(2)-induced neuronal cell death. The protein is Zinc finger protein ZPR1 (ZNF259) of Bos taurus (Bovine).